The sequence spans 117 residues: Large ribosomal subunit protein bL19 (117 aa).

The protein belongs to the bacterial ribosomal protein bL19 family.

In terms of biological role, this protein is located at the 30S-50S ribosomal subunit interface and may play a role in the structure and function of the aminoacyl-tRNA binding site. The polypeptide is Large ribosomal subunit protein bL19 (Sorangium cellulosum (strain So ce56) (Polyangium cellulosum (strain So ce56))).